Consider the following 408-residue polypeptide: FAD-dependent monooxygenase nscC (408 aa).

The N-terminal stretch at Met-1 to Ala-20 is a signal peptide. The FAD site is built by Glu-34 and Ala-45. Asn-91 and Asn-103 each carry an N-linked (GlcNAc...) asparagine glycan. Arg-119 provides a ligand contact to FAD. 2 N-linked (GlcNAc...) asparagine glycosylation sites follow: Asn-170 and Asn-231. Asp-328 and Gly-341 together coordinate FAD.

The protein belongs to the paxM FAD-dependent monooxygenase family. FAD serves as cofactor.

It participates in secondary metabolite biosynthesis. Its function is as follows. FAD-dependent monooxygenase; part of the gene cluster that mediates the biosynthesis of neosartoricin, a prenylated anthracenone that exhibits T-cell antiproliferative activity, suggestive of a physiological role as an immunosuppressive agent. The non-reducing polyketide synthase nscA probably synthesizes and cyclizes the decaketide backbone. The hydrolase nscB then mediates the product release through hydrolysis followed by spontaneous decarboxylation. The prenyltransferase nscD catalyzes the addition of the dimethylallyl group to the aromatic C5. The FAD-dependent monooxygenase nscC is then responsible for the stereospecific hydroxylation at C2. There is no gene encoding O-acetyltransferase in the nsc gene cluster; thus, the last step of 2-O-acetylation leading to neosartoricin may be catalyzed by an unidentified O-acetyltransferase. The polypeptide is FAD-dependent monooxygenase nscC (Neosartorya fischeri (strain ATCC 1020 / DSM 3700 / CBS 544.65 / FGSC A1164 / JCM 1740 / NRRL 181 / WB 181) (Aspergillus fischerianus)).